The primary structure comprises 351 residues: Paired box protein 2 homolog (351 aa).

The paired DNA-binding region spans 91–217; that stretch reads SHTGVNQLGG…SSINRIVRNK (127 aa). The PAI subdomain stretch occupies residues 94 to 150; that stretch reads GVNQLGGVFVNGRPLPDTIRAQIVEMSQHGTRPCDISRQLKVSHGCVSKILGRYYST. An RED subdomain region spans residues 169–217; it reads RVVECIAGYKRANPTMFAWEIRQKLIEDQICGEENVPSVSSINRIVRNK. Positions 226–246 are enriched in polar residues; the sequence is PTSVTPSVARPSSATSQNQRS. Positions 226-258 are disordered; that stretch reads PTSVTPSVARPSSATSQNQRSPPRGVQQHMQQS.

The protein resides in the nucleus. It is found in the chromosome. Transcription factor. Involved in negatively modulating apoptosis in germline and somatic cells, acting in partial redundancy with transcription factor egl-38/PAX5, probably by directly regulating transcription of apoptosis regulator ced-9. May bind to the DNA sequence motif 5'-GTAACG-3' in regulatory elements. The protein is Paired box protein 2 homolog of Caenorhabditis elegans.